A 495-amino-acid polypeptide reads, in one-letter code: YTH domain-containing protein ECT3 (495 aa).

The YTH domain maps to 261 to 398 (AKFYVIKSYS…EQGIKVIKIF (138 aa)). RNA is bound by residues 267-269 (KSY), Asp273, 283-284 (WS), Asn316, Trp340, Trp345, and Trp353.

As to expression, expressed in the shoot apex, at the sites of leaf formation, and in emerging leaves.

Its subcellular location is the cytoplasm. Functionally, specifically recognizes and binds N6-methyladenosine (m6A)-containing RNAs, and regulates mRNA stability. M6A is a modification present at internal sites of mRNAs and some non-coding RNAs and plays a role in mRNA stability and processing. Required for the correct timing of leaf formation and normal leaf morphology. Required for proper trichome branching and morphology. Functions redundantly with ECT2. In Arabidopsis thaliana (Mouse-ear cress), this protein is YTH domain-containing protein ECT3.